The primary structure comprises 1745 residues: ADAMTS-like protein 1 (1745 aa).

Positions 1–28 (MECCRRAAPGTPLLVLAFLLLSSRTARS) are cleaved as a signal peptide. Positions 33–82 (EGLWDAWGPWSECSRTCGGGASYSLRRCLSSKSCEGRNIRYRTCSNVDCP) constitute a TSP type-1 1 domain. 3 disulfides stabilise this stretch: cysteine 45–cysteine 76, cysteine 49–cysteine 81, and cysteine 60–cysteine 66. N-linked (GlcNAc...) asparagine glycosylation occurs at asparagine 251. O-linked (Fuc...) serine glycosylation is found at serine 310 and serine 391. TSP type-1 domains are found at residues 376–424 (PLPR…MYTP), 436–493 (DCPK…TPCY), 522–584 (EEPS…GPCN), 607–667 (ELYD…DPCP), 703–762 (CPPA…KKDD), and 763–825 (CPSE…ATCA). A glycan (O-linked (Fuc...) threonine) is linked at threonine 451. 3 disulfides stabilise this stretch: cysteine 534/cysteine 578, cysteine 538/cysteine 583, and cysteine 549/cysteine 567. Cystine bridges form between cysteine 775-cysteine 819, cysteine 779-cysteine 824, cysteine 790-cysteine 807, and cysteine 874-cysteine 922. The Ig-like C2-type 1 domain maps to 836 to 938 (PHIAAARNIY…EQFVIKLIGG (103 aa)). 2 disordered regions span residues 966–991 (EALQ…GLTA) and 1114–1137 (VSGF…RPHR). Residues 1115-1126 (SGFSSSLRSSSG) are compositionally biased toward low complexity. 3 Ig-like C2-type domains span residues 1139 to 1241 (PAIL…IAVT), 1261 to 1352 (PTVT…TQLL), and 1378 to 1468 (PSVL…ASLV). Disulfide bonds link cysteine 1177/cysteine 1225, cysteine 1283/cysteine 1336, and cysteine 1401/cysteine 1452. TSP type-1 domains are found at residues 1528–1591 (CPSR…QLCV) and 1649–1709 (CSVH…TPCE). Residues 1709 to 1745 (ENTECRDTTRYCEKVRQLKLCQLGQFRSRCCGTCGKA) form the PLAC domain.

As to quaternary structure, monomer. In terms of processing, glycosylated. O-fucosylated by POFUT2 on a serine or a threonine residue found within the consensus sequence C1-X(2)-(S/T)-C2-G of the TSP type-1 repeat domains where C1 and C2 are the first and second cysteine residue of the repeat, respectively. Fucosylated repeats can then be further glycosylated by the addition of a beta-1,3-glucose residue by the glucosyltransferase, B3GALTL. Fucosylation mediates the efficient secretion of ADAMTS family members. Can also be C-glycosylated with one or two mannose molecules on tryptophan residues within the consensus sequence W-X-X-W of the TPRs, and N-glycosylated. These other glycosylations can also facilitate secretion. Post-translationally, disulfide bonds are present.

The protein localises to the secreted. Its subcellular location is the extracellular space. It localises to the extracellular matrix. This is ADAMTS-like protein 1 (Adamtsl1) from Mus musculus (Mouse).